Reading from the N-terminus, the 103-residue chain is Large ribosomal subunit protein bL21 (103 aa).

This sequence belongs to the bacterial ribosomal protein bL21 family. Part of the 50S ribosomal subunit. Contacts protein L20.

Its function is as follows. This protein binds to 23S rRNA in the presence of protein L20. This Shewanella woodyi (strain ATCC 51908 / MS32) protein is Large ribosomal subunit protein bL21.